The sequence spans 299 residues: MQAIILGSAAGGGVPQWNCRCPICAMAWAGDRRVLPRTQSSLAVSPDGERWLLVNASPDIRQQLLATPALHPRHGLRHTPIEAVLLTNGDVDHVAGLLTLRESQPFRLHATRNILESVSANRVFDVLAADLVARREVGLNETFEPVSGLAVTLFPVPGKVPLWLEEGTPEIGAETETTVGAMIEAGGRRLAYVPGCARVTEDLRHRLAGVDALLFDGTVLADDDMIRAGVGTKTGWRMGHVPMTGQGGSIAALAEVPIGRRIFVHINNTNPVLVENSEARRAVEAAGWDVGHDGMALRL.

It belongs to the PqqB family.

It functions in the pathway cofactor biosynthesis; pyrroloquinoline quinone biosynthesis. Functionally, may be involved in the transport of PQQ or its precursor to the periplasm. This chain is Coenzyme PQQ synthesis protein B, found in Methylobacterium nodulans (strain LMG 21967 / CNCM I-2342 / ORS 2060).